The primary structure comprises 214 residues: Threonylcarbamoyl-AMP synthase (214 aa).

Positions 9-214 constitute a YrdC-like domain; it reads TDSTIQAATW…GDALTGQVIR (206 aa).

This sequence belongs to the SUA5 family. TsaC subfamily.

It is found in the cytoplasm. The catalysed reaction is L-threonine + hydrogencarbonate + ATP = L-threonylcarbamoyladenylate + diphosphate + H2O. Functionally, required for the formation of a threonylcarbamoyl group on adenosine at position 37 (t(6)A37) in tRNAs that read codons beginning with adenine. Catalyzes the conversion of L-threonine, HCO(3)(-)/CO(2) and ATP to give threonylcarbamoyl-AMP (TC-AMP) as the acyladenylate intermediate, with the release of diphosphate. This chain is Threonylcarbamoyl-AMP synthase, found in Psychrobacter cryohalolentis (strain ATCC BAA-1226 / DSM 17306 / VKM B-2378 / K5).